The primary structure comprises 158 residues: Probable cyclic pyranopterin monophosphate synthase (158 aa).

Residues 78-80 and 114-115 contribute to the substrate site; these read MCH and ME. Residue D129 is part of the active site.

This sequence belongs to the MoaC family. Homohexamer; trimer of dimers.

It carries out the reaction (8S)-3',8-cyclo-7,8-dihydroguanosine 5'-triphosphate = cyclic pyranopterin phosphate + diphosphate. It participates in cofactor biosynthesis; molybdopterin biosynthesis. In terms of biological role, catalyzes the conversion of (8S)-3',8-cyclo-7,8-dihydroguanosine 5'-triphosphate to cyclic pyranopterin monophosphate (cPMP). This chain is Probable cyclic pyranopterin monophosphate synthase, found in Methanosarcina acetivorans (strain ATCC 35395 / DSM 2834 / JCM 12185 / C2A).